A 211-amino-acid polypeptide reads, in one-letter code: Small ribosomal subunit protein uS3c (211 aa).

The KH type-2 domain occupies Ile39 to Gln109.

It belongs to the universal ribosomal protein uS3 family. In terms of assembly, part of the 30S ribosomal subunit.

Its subcellular location is the plastid. It localises to the chloroplast. This Ostreococcus tauri protein is Small ribosomal subunit protein uS3c (rps3).